A 487-amino-acid chain; its full sequence is L-tartrate/succinate antiporter (487 aa).

14 helical membrane-spanning segments follow: residues 10–30, 33–53, 54–74, 93–113, 137–157, 189–209, 230–250, 292–312, 313–333, 340–360, 370–390, 393–413, 418–438, and 465–485; these read YLAPLAVIAIIALIPVPAGLE, TWLYFAVFTGVIVGLILEPVP, GAVVAMVGISIIAILSPWLLF, WAVSGFSNSVIWLIFAAFMFG, TLFLGYAVMFSELILAPVTPS, IGSYIMWIGIVADCVTSAIFL, LSWGDWFLGMLPLSILLVLLV, LMVGALVLWIFGGDYIDAAMV, GYSVVALMLLLRIISWDDIVS, VFFWLASLITLATGLNNTGFI, SLSGYSPTMVMVALIVVFYLL, FFASATAYTSALAPMMIAAAL, IPLPVFCLMVGAAIGLGSILT, and IFGLIFLVLLVITGLLWMPVV.

It belongs to the SLC13A/DASS transporter (TC 2.A.47) family. DIT1 subfamily.

The protein localises to the cell inner membrane. The enzyme catalyses (2R,3R)-tartrate(out) + succinate(in) = (2R,3R)-tartrate(in) + succinate(out). Its function is as follows. Catalyzes the uptake of tartrate in exchange for intracellular succinate. Essential for anaerobic L-tartrate fermentation. The sequence is that of L-tartrate/succinate antiporter (ttdT) from Shigella dysenteriae serotype 1 (strain Sd197).